A 419-amino-acid chain; its full sequence is Acyl-coenzyme A thioesterase 1 (419 aa).

Active-site charge relay system residues include serine 232, aspartate 324, and histidine 358. Serine 416 bears the Phosphoserine mark.

It belongs to the C/M/P thioester hydrolase family. Monomer. As to expression, expressed in liver.

It localises to the cytoplasm. The protein resides in the cytosol. The enzyme catalyses hexadecanoyl-CoA + H2O = hexadecanoate + CoA + H(+). It catalyses the reaction dodecanoyl-CoA + H2O = dodecanoate + CoA + H(+). It carries out the reaction tetradecanoyl-CoA + H2O = tetradecanoate + CoA + H(+). The catalysed reaction is decanoyl-CoA + H2O = decanoate + CoA + H(+). The enzyme catalyses octadecanoyl-CoA + H2O = octadecanoate + CoA + H(+). It catalyses the reaction eicosanoyl-CoA + H2O = eicosanoate + CoA + H(+). It carries out the reaction (9Z)-octadecenoyl-CoA + H2O = (9Z)-octadecenoate + CoA + H(+). The catalysed reaction is (9Z)-hexadecenoyl-CoA + H2O = (9Z)-hexadecenoate + CoA + H(+). The enzyme catalyses (9E)-octadecenoyl-CoA + H2O = (9E)-octadecenoate + CoA + H(+). The protein operates within lipid metabolism; fatty acid metabolism. Its function is as follows. Catalyzes the hydrolysis of acyl-CoAs into free fatty acids and coenzyme A (CoASH), regulating their respective intracellular levels. More active towards saturated and unsaturated long chain fatty acyl-CoAs (C12-C20). The polypeptide is Acyl-coenzyme A thioesterase 1 (Acot1) (Rattus norvegicus (Rat)).